Here is a 156-residue protein sequence, read N- to C-terminus: Ribonuclease 1B pancreatic (156 aa).

An N-terminal signal peptide occupies residues 1 to 28 (MALDKSVIPLPLLVVVLLVLGWAQPSLG). Residues lysine 35 and arginine 38 each contribute to the substrate site. Histidine 40 (proton acceptor) is an active-site residue. Intrachain disulfides connect cysteine 54/cysteine 112, cysteine 68/cysteine 123, cysteine 86/cysteine 138, and cysteine 93/cysteine 100. An N-linked (GlcNAc...) asparagine glycan is attached at asparagine 62. Residues 69–73 (KSVNT), lysine 94, and arginine 113 contribute to the substrate site. Asparagine 116 carries an N-linked (GlcNAc...) asparagine glycan. The Proton donor role is filled by histidine 147.

The protein belongs to the pancreatic ribonuclease family. As to quaternary structure, monomer.

Its subcellular location is the secreted. The enzyme catalyses an [RNA] containing cytidine + H2O = an [RNA]-3'-cytidine-3'-phosphate + a 5'-hydroxy-ribonucleotide-3'-[RNA].. It catalyses the reaction an [RNA] containing uridine + H2O = an [RNA]-3'-uridine-3'-phosphate + a 5'-hydroxy-ribonucleotide-3'-[RNA].. Functionally, endonuclease that catalyzes the cleavage of RNA on the 3' side of pyrimidine nucleotides. Compared to RNASE1 it has lost activity towards dsRNA. The polypeptide is Ribonuclease 1B pancreatic (RNASE1B) (Pygathrix nemaeus (Red-shanked douc langur)).